Reading from the N-terminus, the 95-residue chain is UPF0358 protein GK1077 (95 aa).

The protein belongs to the UPF0358 family.

The sequence is that of UPF0358 protein GK1077 from Geobacillus kaustophilus (strain HTA426).